A 148-amino-acid chain; its full sequence is Macrodomain Ter protein (148 aa).

This sequence belongs to the MatP family. In terms of assembly, homodimer.

It is found in the cytoplasm. In terms of biological role, required for spatial organization of the terminus region of the chromosome (Ter macrodomain) during the cell cycle. Prevents early segregation of duplicated Ter macrodomains during cell division. Binds specifically to matS, which is a 13 bp signature motif repeated within the Ter macrodomain. This chain is Macrodomain Ter protein, found in Aliivibrio salmonicida (strain LFI1238) (Vibrio salmonicida (strain LFI1238)).